A 344-amino-acid polypeptide reads, in one-letter code: Phosphoribosylformylglycinamidine cyclo-ligase (344 aa).

Belongs to the AIR synthase family.

The protein resides in the cytoplasm. It carries out the reaction 2-formamido-N(1)-(5-O-phospho-beta-D-ribosyl)acetamidine + ATP = 5-amino-1-(5-phospho-beta-D-ribosyl)imidazole + ADP + phosphate + H(+). It participates in purine metabolism; IMP biosynthesis via de novo pathway; 5-amino-1-(5-phospho-D-ribosyl)imidazole from N(2)-formyl-N(1)-(5-phospho-D-ribosyl)glycinamide: step 2/2. This chain is Phosphoribosylformylglycinamidine cyclo-ligase, found in Neisseria gonorrhoeae (strain ATCC 700825 / FA 1090).